Here is a 311-residue protein sequence, read N- to C-terminus: Probable manganese-dependent inorganic pyrophosphatase (311 aa).

Residues His-9, Asp-13, Asp-15, Asp-77, His-99, and Asp-151 each contribute to the Mn(2+) site.

Belongs to the PPase class C family. Requires Mn(2+) as cofactor.

The protein resides in the cytoplasm. The catalysed reaction is diphosphate + H2O = 2 phosphate + H(+). In Streptococcus agalactiae serotype Ia (strain ATCC 27591 / A909 / CDC SS700), this protein is Probable manganese-dependent inorganic pyrophosphatase.